Reading from the N-terminus, the 187-residue chain is UPF0301 protein SG2023 (187 aa).

It belongs to the UPF0301 (AlgH) family.

In Sodalis glossinidius (strain morsitans), this protein is UPF0301 protein SG2023.